The sequence spans 182 residues: Transcription termination/antitermination protein NusG (182 aa).

This sequence belongs to the NusG family.

Participates in transcription elongation, termination and antitermination. The chain is Transcription termination/antitermination protein NusG from Chlamydia muridarum (strain MoPn / Nigg).